The primary structure comprises 460 residues: GTPase Der (460 aa).

2 consecutive EngA-type G domains span residues 3 to 167 (FTFA…PEPD) and 189 to 364 (IRVA…AVWN). Residues 9–16 (GRPNVGKS), 56–60 (DTAGL), 119–122 (NKSE), 195–202 (GRPNAGKS), 242–246 (DTAGL), and 307–310 (NKWD) each bind GTP. The region spanning 365–449 (TRVPTAALNR…PVRIMLREKA (85 aa)) is the KH-like domain.

It belongs to the TRAFAC class TrmE-Era-EngA-EngB-Septin-like GTPase superfamily. EngA (Der) GTPase family. In terms of assembly, associates with the 50S ribosomal subunit.

Its function is as follows. GTPase that plays an essential role in the late steps of ribosome biogenesis. In Rhodopseudomonas palustris (strain BisB5), this protein is GTPase Der.